Reading from the N-terminus, the 232-residue chain is Ornithine carbamoyltransferase (232 aa).

Residues Gln-15, Arg-39, and 66 to 69 (HPTQ) contribute to the carbamoyl phosphate site. L-ornithine is bound by residues Asn-99, Asp-163, and 167–168 (SM). Carbamoyl phosphate is bound by residues 204–207 (HCLP) and Thr-232.

This sequence belongs to the aspartate/ornithine carbamoyltransferase superfamily. OTCase family.

The protein localises to the cytoplasm. The catalysed reaction is carbamoyl phosphate + L-ornithine = L-citrulline + phosphate + H(+). The protein operates within amino-acid biosynthesis; L-arginine biosynthesis; L-arginine from L-ornithine and carbamoyl phosphate: step 1/3. In terms of biological role, reversibly catalyzes the transfer of the carbamoyl group from carbamoyl phosphate (CP) to the N(epsilon) atom of ornithine (ORN) to produce L-citrulline. The protein is Ornithine carbamoyltransferase (argF) of Neisseria flava.